We begin with the raw amino-acid sequence, 238 residues long: Orotidine 5'-phosphate decarboxylase (238 aa).

Residues aspartate 10, lysine 32, 59 to 68 (DLKLHDIPNT), threonine 122, arginine 184, glutamine 193, glycine 213, and arginine 214 each bind substrate. The Proton donor role is filled by lysine 61.

This sequence belongs to the OMP decarboxylase family. Type 1 subfamily. Homodimer.

It catalyses the reaction orotidine 5'-phosphate + H(+) = UMP + CO2. Its pathway is pyrimidine metabolism; UMP biosynthesis via de novo pathway; UMP from orotate: step 2/2. Its function is as follows. Catalyzes the decarboxylation of orotidine 5'-monophosphate (OMP) to uridine 5'-monophosphate (UMP). The sequence is that of Orotidine 5'-phosphate decarboxylase from Bacillus mycoides (strain KBAB4) (Bacillus weihenstephanensis).